The chain runs to 352 residues: Phosphoribosylformylglycinamidine cyclo-ligase (352 aa).

The protein belongs to the AIR synthase family.

It is found in the cytoplasm. The enzyme catalyses 2-formamido-N(1)-(5-O-phospho-beta-D-ribosyl)acetamidine + ATP = 5-amino-1-(5-phospho-beta-D-ribosyl)imidazole + ADP + phosphate + H(+). It participates in purine metabolism; IMP biosynthesis via de novo pathway; 5-amino-1-(5-phospho-D-ribosyl)imidazole from N(2)-formyl-N(1)-(5-phospho-D-ribosyl)glycinamide: step 2/2. The polypeptide is Phosphoribosylformylglycinamidine cyclo-ligase (Stenotrophomonas maltophilia (strain K279a)).